We begin with the raw amino-acid sequence, 392 residues long: Ribosomal RNA large subunit methyltransferase G (392 aa).

It belongs to the methyltransferase superfamily. RlmG family.

It is found in the cytoplasm. It catalyses the reaction guanosine(1835) in 23S rRNA + S-adenosyl-L-methionine = N(2)-methylguanosine(1835) in 23S rRNA + S-adenosyl-L-homocysteine + H(+). Specifically methylates the guanine in position 1835 (m2G1835) of 23S rRNA. The protein is Ribosomal RNA large subunit methyltransferase G of Colwellia psychrerythraea (strain 34H / ATCC BAA-681) (Vibrio psychroerythus).